A 149-amino-acid chain; its full sequence is Large ribosomal subunit protein bL9 (149 aa).

Belongs to the bacterial ribosomal protein bL9 family.

Functionally, binds to the 23S rRNA. The protein is Large ribosomal subunit protein bL9 of Haemophilus influenzae (strain PittEE).